We begin with the raw amino-acid sequence, 426 residues long: MMPTLAPPSVLSAPQRRCQILLTLFQPGLTATMATFSELNGVDDDIASLDISETGREILRYHQLTLTTGYDGSYRVEGTVLNQRLCLFHWLRRGFRLCPSFITSQFTPALKSELKRRGIARNFYDDTNLQALVNLCSRRLQKRFESRDIHFLCLYLQYCLLQHHAGITPQFNPLQRRWAESCLEFQVAQEIGRHWQRRALQPVPPDEPLFMALLFSMLRVPDPLRDAHQRDRQLRQSIKRLVNHFRELGNVRFYDEQGLCDQLYTHLAQALNRSLFAIGIDNTLPEEFARLYPRLVRTTRAALAGFESEYGVHLSDEESGLVAVIFGAWLMQENDLHEKQIILLTGNDSEREAQIEQQLRELTLLPLNIKHMSVKAFLQTGAPRGAALIIAPYTMPLPLFSPPLIYTDLTLTTHQQEQIRKMLESA.

2 consecutive PRD domains span residues 120–225 (ARNF…DPLR) and 229–336 (QRDR…ENDL).

This is Stationary phase-inducible protein CsiE (csiE) from Escherichia coli (strain K12).